Reading from the N-terminus, the 193-residue chain is Bcl-2-like protein 2 (193 aa).

Alanine 2 carries the N-acetylalanine modification. Positions 9 to 29 (DTRALVADFVGYKLRQKGYVC) match the BH4 motif. Positions 85-104 (ELFQGGPNWGRLVAFFVFGA) match the BH1 motif. The BH2 signature appears at 136-151 (DWIHSSGGWAEFTALY). Alanine 177 bears the Phosphoserine mark.

This sequence belongs to the Bcl-2 family. In terms of assembly, interacts with HIF3A (via C-terminus domain). Interacts with BOP. In terms of tissue distribution, expressed (at protein level) in a wide range of tissues with highest levels in brain, spinal cord, testis, pancreas, heart, spleen and mammary glands. Moderate levels found in thymus, ovary and small intestine. Not detected in salivary gland, muscle or liver. Also expressed in cell lines of myeloid, fibroblast and epithelial origin. Not detected in most lymphoid cell lines.

Its subcellular location is the mitochondrion membrane. In terms of biological role, promotes cell survival. Blocks dexamethasone-induced apoptosis. Mediates survival of postmitotic Sertoli cells by suppressing death-promoting activity of BAX. The chain is Bcl-2-like protein 2 (BCL2L2) from Homo sapiens (Human).